The primary structure comprises 1150 residues: Solute carrier family 12 member 6 (1150 aa).

Positions 1 to 108 are disordered; that stretch reads MHPPEATTKM…GEHSQLLDDG (108 aa). Over 1 to 135 the chain is Cytoplasmic; it reads MHPPEATTKM…DEYFDKNLAL (135 aa). Over residues 28–45 the composition is skewed to low complexity; sequence LSDTSPDLSSRSSSRVRF. Phosphoserine is present on Ser-32. A compositionally biased stretch (polar residues) spans 80 to 101; the sequence is DRTSNPQDVTEDPSQNSITGEH. At Ser-120 the chain carries Phosphoserine. Residues 136-158 traverse the membrane as a discontinuously helical segment; the sequence is FEEEMDTRPKVSSLLNRMANYTN. Residues Ser-147 and Ser-148 each contribute to the K(+) site. Ser-148 bears the Phosphoserine mark. Position 151 (Asn-151) interacts with chloride. Over 159–165 the chain is Extracellular; that stretch reads LTQGAKE. The interval 161–181 is disordered; the sequence is QGAKEHEEAENITEGKKKPTK. The segment covering 163–177 has biased composition (basic and acidic residues); it reads AKEHEEAENITEGKK. A helical transmembrane segment spans residues 166-188; that stretch reads HEEAENITEGKKKPTKSPQMGTF. Topologically, residues 189-211 are cytoplasmic; it reads MGVYLPCLQNIFGVILFLRLTWV. A helical transmembrane segment spans residues 212-245; sequence VGTAGILQAFAIVLICCCCTMLTAISMSAIATNG. Topologically, residues 246–263 are extracellular; sequence VVPAGGSYFMISRALGPE. The next 2 membrane-spanning stretches (helical) occupy residues 264-287 and 288-316; these read FGGA…ILGA and IEIF…AMLN. Tyr-283 serves as a coordination point for K(+). Topologically, residues 317 to 433 are extracellular; sequence NMRVYGTAFL…FVHNNVISIQ (117 aa). An intrachain disulfide couples Cys-375 to Cys-390. Asn-379, Asn-398, Asn-411, and Asn-417 each carry an N-linked (GlcNAc...) asparagine glycan. A disulfide bond links Cys-410 and Cys-420. Residues 434–454 traverse the membrane as a helical segment; the sequence is GIPGLASGIITENLWSNYLPK. 3 residues coordinate K(+): Ile-443, Thr-444, and Asn-446. Residues Ile-443 and Thr-444 each coordinate chloride. Chloride contacts are provided by Leu-447 and Trp-448. The Cytoplasmic portion of the chain corresponds to 455 to 464; the sequence is GEIIEKPSAK. The chain crosses the membrane as a helical span at residues 465-487; that stretch reads SSDVLGNLNHEYVLADITTSFTL. At 488-518 the chain is on the extracellular side; sequence LVGIFFPSVTGIMAGSNRSGDLKDAQKSIPI. Thr-497 is a K(+) binding site. Residues 519–545 traverse the membrane as a helical segment; sequence GTILAILTTSFVYLSNVVLFGACIEGV. Residues 546–568 lie on the Cytoplasmic side of the membrane; it reads VLRDKFGDAVKGNLVVGTLSWPS. 2 consecutive transmembrane segments (helical) span residues 569–589 and 590–612; these read PWVI…QSLT and GAPR…VFGH. Residue Ile-603 participates in chloride binding. The Cytoplasmic portion of the chain corresponds to 613 to 629; that stretch reads SKANGEPTWALLLTAAI. Transmembrane regions (helical) follow at residues 630–649 and 650–665; these read AELG…LSMF and FLMC…ALQT. Tyr-654 provides a ligand contact to chloride. The Cytoplasmic portion of the chain corresponds to 666 to 1150; the sequence is LLRTPNWRPR…GGSEVITIYS (485 aa). Residues 682-691 form a scissor helix region; it reads ALSFMGMSIC. The residue at position 736 (Ser-736) is a Phosphoserine. The residue at position 778 (Thr-778) is a Phosphothreonine. Ser-981 carries the post-translational modification Phosphoserine. Phosphothreonine is present on Thr-991. A phosphoserine mark is found at Ser-1023, Ser-1029, and Ser-1032. Thr-1048 carries the post-translational modification Phosphothreonine. Tyr-1121 bears the Phosphotyrosine mark.

This sequence belongs to the SLC12A transporter family. K/Cl co-transporter subfamily. Homodimer; adopts a domain-swap conformation at the scissor helices connecting the transmembrane domain and C-terminal domain. Heterodimer with K-Cl cotransporter SLC12A5. Interacts (via C-terminus) with CKB; the interaction may be required for potassium-chloride cotransport activity. Phosphorylated, phosphorylation regulates transporter activity. Phosphorylated at Thr-991 and Thr-1048 by OXSR1/OSR1 and STK39/SPAK downstream of WNK kinases (WNK1, WNK2, WNK3 or WNK4), inhibiting the potassium-chloride cotransport activity. In terms of processing, N-glycosylated. As to expression, expressed in hippocampus and corpus callosum (at protein level). Highly expressed throughout the brain and detected at lower levels in kidney. Highly expressed in highly myelinated white matter of the brain, but not in gray matter. Detected in the corpus callosum, in packed cell layers of the hippocampus and in Purkinje neurons within the cerebellum. Highly expressed in white matter in the spinal cord, but not in dorsal root ganglia or sciatic nerve. Colocalizes with the oligodendrocyte marker CNP. Expressed in hippocampus in CA1, and to a lesser extent CA3 pyramidal cells. Also expressed in cortex, mostly in large neurons and in the large cerebellar Purkinje cells. In terms of tissue distribution, highly expressed in kidney, but not detected in brain.

The protein resides in the cell membrane. It localises to the basolateral cell membrane. It catalyses the reaction K(+)(in) + chloride(in) = K(+)(out) + chloride(out). Inhibited following phosphorylation by OXSR1/OSR1 and STK39/SPAK: phosphorylation takes place downstream of WNK kinases (WNK1, WNK2, WNK3 or WNK4) in response to hyperosmotic stress and subsequent cell shrinkage. Mediates electroneutral potassium-chloride cotransport when activated by cell swelling. May contribute to cell volume homeostasis in single cells. Its function is as follows. Mediates electroneutral potassium-chloride cotransport when activated by cell swelling. May contribute to cell volume homeostasis in single cells. This Mus musculus (Mouse) protein is Solute carrier family 12 member 6 (Slc12a6).